A 78-amino-acid polypeptide reads, in one-letter code: NAD(P)H-quinone oxidoreductase subunit L (78 aa).

2 helical membrane-spanning segments follow: residues 10–30 (LFVI…IPLG) and 48–68 (LLIY…APFL).

The protein belongs to the complex I NdhL subunit family. NDH-1 can be composed of about 15 different subunits; different subcomplexes with different compositions have been identified which probably have different functions.

Its subcellular location is the cellular thylakoid membrane. The catalysed reaction is a plastoquinone + NADH + (n+1) H(+)(in) = a plastoquinol + NAD(+) + n H(+)(out). The enzyme catalyses a plastoquinone + NADPH + (n+1) H(+)(in) = a plastoquinol + NADP(+) + n H(+)(out). NDH-1 shuttles electrons from an unknown electron donor, via FMN and iron-sulfur (Fe-S) centers, to quinones in the respiratory and/or the photosynthetic chain. The immediate electron acceptor for the enzyme in this species is believed to be plastoquinone. Couples the redox reaction to proton translocation, and thus conserves the redox energy in a proton gradient. Cyanobacterial NDH-1 also plays a role in inorganic carbon-concentration. This Prochlorococcus marinus (strain SARG / CCMP1375 / SS120) protein is NAD(P)H-quinone oxidoreductase subunit L.